Consider the following 355-residue polypeptide: UDP-N-acetylglucosamine--N-acetylmuramyl-(pentapeptide) pyrophosphoryl-undecaprenol N-acetylglucosamine transferase (355 aa).

UDP-N-acetyl-alpha-D-glucosamine contacts are provided by residues threonine 15–glycine 17, asparagine 127, arginine 163, serine 191, isoleucine 244, alanine 263–glutamate 268, and glutamine 288.

The protein belongs to the glycosyltransferase 28 family. MurG subfamily.

The protein localises to the cell inner membrane. It catalyses the reaction di-trans,octa-cis-undecaprenyl diphospho-N-acetyl-alpha-D-muramoyl-L-alanyl-D-glutamyl-meso-2,6-diaminopimeloyl-D-alanyl-D-alanine + UDP-N-acetyl-alpha-D-glucosamine = di-trans,octa-cis-undecaprenyl diphospho-[N-acetyl-alpha-D-glucosaminyl-(1-&gt;4)]-N-acetyl-alpha-D-muramoyl-L-alanyl-D-glutamyl-meso-2,6-diaminopimeloyl-D-alanyl-D-alanine + UDP + H(+). It functions in the pathway cell wall biogenesis; peptidoglycan biosynthesis. Cell wall formation. Catalyzes the transfer of a GlcNAc subunit on undecaprenyl-pyrophosphoryl-MurNAc-pentapeptide (lipid intermediate I) to form undecaprenyl-pyrophosphoryl-MurNAc-(pentapeptide)GlcNAc (lipid intermediate II). The chain is UDP-N-acetylglucosamine--N-acetylmuramyl-(pentapeptide) pyrophosphoryl-undecaprenol N-acetylglucosamine transferase from Escherichia coli O139:H28 (strain E24377A / ETEC).